A 1231-amino-acid polypeptide reads, in one-letter code: uncharacterized protein (1231 aa).

Disordered stretches follow at residues 171–197 (LKPD…QHDD), 210–259 (DESF…HLPT), and 389–547 (ASPR…RSSR). The span at 440–450 (RSRHSHKRRSI) shows a compositional bias: basic residues. A phosphoserine mark is found at S449, S451, S453, and S455. Residues 458–502 (RGGRRAVRRSRSRSPRRSYNRGSTRSRSRSMRHRSRSPAHYRGRG) are compositionally biased toward basic residues. The segment covering 503–541 (RGREPASKERGSSSRDFGGRHSLQRERERSSEYYHRNEG) has biased composition (basic and acidic residues). Phosphotyrosine is present on Y549. 3 disordered regions span residues 570–591 (KTSS…ASEP), 950–981 (PNLD…DDEE), and 1058–1203 (TLSK…PPFN). 2 positions are modified to phosphoserine: S573 and S589. Phosphothreonine is present on T970. S972 carries the phosphoserine modification. A compositionally biased stretch (polar residues) spans 1076-1103 (YMMNQQHGAPNAQNAPNLGQNPGQNLGQ). Residues 1118 to 1127 (QQQQQQQQQQ) are compositionally biased toward low complexity. Residues 1178–1203 (PPGPGGYVGPPPNPWASNVPPQPPFN) show a composition bias toward pro residues.

This is an uncharacterized protein from Drosophila melanogaster (Fruit fly).